Reading from the N-terminus, the 285-residue chain is Ribosomal protein L11 methyltransferase (285 aa).

S-adenosyl-L-methionine contacts are provided by threonine 131, glycine 154, aspartate 176, and asparagine 223.

The protein belongs to the methyltransferase superfamily. PrmA family.

The protein localises to the cytoplasm. It carries out the reaction L-lysyl-[protein] + 3 S-adenosyl-L-methionine = N(6),N(6),N(6)-trimethyl-L-lysyl-[protein] + 3 S-adenosyl-L-homocysteine + 3 H(+). Its function is as follows. Methylates ribosomal protein L11. The sequence is that of Ribosomal protein L11 methyltransferase from Brucella abortus (strain S19).